The chain runs to 63 residues: Small ribosomal subunit protein eS31 (63 aa).

4 residues coordinate Zn(2+): Cys31, Cys34, Cys50, and Cys53. Residues 31-53 (CPRCGSIMAHHMKPVERWACGKC) form a C4-type zinc finger.

It belongs to the eukaryotic ribosomal protein eS31 family. In terms of assembly, part of the 30S ribosomal subunit. The cofactor is Zn(2+).

This is Small ribosomal subunit protein eS31 from Sulfurisphaera tokodaii (strain DSM 16993 / JCM 10545 / NBRC 100140 / 7) (Sulfolobus tokodaii).